Here is a 279-residue protein sequence, read N- to C-terminus: Large ribosomal subunit protein uL2 (279 aa).

The interval 222-264 is disordered; the sequence is GVAMNPVDHPHGGGEGRTSGGRNPVTPAGKPTKGAKTRVNKAT.

This sequence belongs to the universal ribosomal protein uL2 family. As to quaternary structure, part of the 50S ribosomal subunit. Forms a bridge to the 30S subunit in the 70S ribosome.

Its function is as follows. One of the primary rRNA binding proteins. Required for association of the 30S and 50S subunits to form the 70S ribosome, for tRNA binding and peptide bond formation. It has been suggested to have peptidyltransferase activity; this is somewhat controversial. Makes several contacts with the 16S rRNA in the 70S ribosome. The polypeptide is Large ribosomal subunit protein uL2 (Caulobacter sp. (strain K31)).